Here is a 433-residue protein sequence, read N- to C-terminus: D-amino acid dehydrogenase (433 aa).

Position 3–17 (3–17 (VLVLGSGVIGTTSAY)) interacts with FAD.

This sequence belongs to the DadA oxidoreductase family. The cofactor is FAD.

It catalyses the reaction a D-alpha-amino acid + A + H2O = a 2-oxocarboxylate + AH2 + NH4(+). It participates in amino-acid degradation; D-alanine degradation; NH(3) and pyruvate from D-alanine: step 1/1. Its function is as follows. Oxidative deamination of D-amino acids. The chain is D-amino acid dehydrogenase from Pseudomonas syringae pv. syringae (strain B728a).